Here is a 314-residue protein sequence, read N- to C-terminus: tRNA dimethylallyltransferase 1 (314 aa).

8-15 provides a ligand contact to ATP; the sequence is GPTGSGKS. Substrate is bound at residue 10-15; sequence TGSGKS.

This sequence belongs to the IPP transferase family. Monomer. Requires Mg(2+) as cofactor.

It catalyses the reaction adenosine(37) in tRNA + dimethylallyl diphosphate = N(6)-dimethylallyladenosine(37) in tRNA + diphosphate. Its function is as follows. Catalyzes the transfer of a dimethylallyl group onto the adenine at position 37 in tRNAs that read codons beginning with uridine, leading to the formation of N6-(dimethylallyl)adenosine (i(6)A). The protein is tRNA dimethylallyltransferase 1 of Mycobacterium ulcerans (strain Agy99).